The sequence spans 171 residues: Neudesin (171 aa).

The signal sequence occupies residues 1–30; the sequence is MARPAPWWWLRPLAALALALALVRVPSARA. Residues 43–128 form the Cytochrome b5 heme-binding domain; sequence VRLFTEEELA…KELEALDDIF (86 aa). Residue K135 is modified to N6-acetyllysine. A disordered region spans residues 151–171; the sequence is GSPNLDFKPEDQPHFDIKDEF. Basic and acidic residues predominate over residues 157-171; it reads FKPEDQPHFDIKDEF.

This sequence belongs to the cytochrome b5 family. MAPR subfamily. Interacts with PINK1 and PARK7.

Its subcellular location is the secreted. The protein localises to the extracellular space. The protein resides in the mitochondrion. It is found in the endoplasmic reticulum. Its function is as follows. Acts as a neurotrophic factor in postnatal mature neurons enhancing neuronal survival. Promotes cell proliferation and neurogenesis in undifferentiated neural progenitor cells at the embryonic stage and inhibits differentiation of astrocytes. Its neurotrophic activity is exerted via MAPK1/ERK2, MAPK3/ERK1 and AKT1/AKT pathways. Neurotrophic activity is enhanced by binding to heme. Also acts as an anorexigenic neurotrophic factor that contributes to energy balance. The polypeptide is Neudesin (Rattus norvegicus (Rat)).